A 1040-amino-acid chain; its full sequence is Putative protein tag-76 (1040 aa).

The span at 1-15 shows a compositional bias: polar residues; that stretch reads MSRRNATSFVDNNTL. Disordered stretches follow at residues 1 to 61 and 322 to 367; these read MSRR…GSVS and RTSK…PGAN. A compositionally biased stretch (low complexity) spans 16–32; it reads TSSGISGSGSMSPPITS. The span at 33 to 50 shows a compositional bias: polar residues; it reads RPASGQASPLTSNGSLSP. Positions 333-356 are enriched in gly residues; sequence GPGGPGGPGGYRGGRGGGRGGSYG. The PAZ domain maps to 379–486; it reads FTMDTLSRDT…LPMEHCLIDS (108 aa). The Piwi domain maps to 660 to 966; it reads CIIVVLQSKN…VATRARCHVK (307 aa).

The sequence is that of Putative protein tag-76 (tag-76) from Caenorhabditis elegans.